We begin with the raw amino-acid sequence, 200 residues long: Serotonin N-acetyltransferase 2, chloroplastic (200 aa).

A chloroplast-targeting transit peptide spans 1–41; sequence MQMQAARPRVGVRPRGGIRPFPLPTLSFNNNSNRSACACAC. Residues 55 to 195 enclose the N-acetyltransferase domain; sequence FAVRRSSTGL…MAFYRSRQQI (141 aa).

The protein localises to the cytoplasm. The protein resides in the plastid. It localises to the chloroplast. The catalysed reaction is serotonin + acetyl-CoA = N-acetylserotonin + CoA + H(+). It carries out the reaction tyramine + acetyl-CoA = N-acetyltyramine + CoA + H(+). The enzyme catalyses tryptamine + acetyl-CoA = N-acetyltryptamine + CoA + H(+). It catalyses the reaction 5-methoxytryptamine + acetyl-CoA = melatonin + CoA + H(+). It functions in the pathway aromatic compound metabolism; melatonin biosynthesis; melatonin from serotonin: step 1/2. Its function is as follows. Catalyzes the N-acetylation of serotonin into N-acetylserotonin, the penultimate step in the synthesis of melatonin. Catalyzes in vitro the N-acetylation of tryptamine to produce N-acetyltryptamine, 5-methoxytryptamine to produce melatonin and tyramine to produce N-acetyltyramine. In Oryza sativa subsp. japonica (Rice), this protein is Serotonin N-acetyltransferase 2, chloroplastic.